Consider the following 312-residue polypeptide: Pantothenate kinase (312 aa).

Residue 92 to 99 (GSVAVGKS) participates in ATP binding.

This sequence belongs to the prokaryotic pantothenate kinase family.

The protein resides in the cytoplasm. The catalysed reaction is (R)-pantothenate + ATP = (R)-4'-phosphopantothenate + ADP + H(+). The protein operates within cofactor biosynthesis; coenzyme A biosynthesis; CoA from (R)-pantothenate: step 1/5. This Vibrio cholerae serotype O1 (strain ATCC 39315 / El Tor Inaba N16961) protein is Pantothenate kinase (coaA).